A 506-amino-acid chain; its full sequence is MRGDRMSKAPRTAISPTREENYPEWYQQVIRAADLAENSPVRGCMVIKPWGYQLWENVQRALDDMFKATGHQNAYFPLFIPMSFLEKEAEHVEGFAKECAVVTHHRLEPDPDGGLRPAGKLEEPLIVRPTSETIIGATYAKWVQSYRDLPILINQWANVVRWEMRTRMFLRTAEFLWQEGHTVHATSEEAVEETEKMVEVYRDFAENWMAMPVIVGSKTPLERFPGAVETLSIEAMMQDRKALQAGTSHFLGQNFSKAQEIKFQSESGDIEFAWTTSWGVSTRLIGALIMTHSDDDGLVLPPRLAPTHVVIQPIYKDDSRAEVMEYVQSLRDELAAQTYANAPVRVTIDDRDIRGGEKKWYHVKRGVPIRLEVGPKDIAAGTVFCGIRNQPKSVGIDRAELVATIGEKLATLQQELFDAALKMREDNTVELTSEAEFRDFFADKGDTAITGGFAWCHYCDEDSLQPLLKELKVTIRCVPRSDNATEGTCFLTGKPAAQRAIFAKAY.

Belongs to the class-II aminoacyl-tRNA synthetase family. ProS type 3 subfamily. In terms of assembly, homodimer.

Its subcellular location is the cytoplasm. It carries out the reaction tRNA(Pro) + L-proline + ATP = L-prolyl-tRNA(Pro) + AMP + diphosphate. In terms of biological role, catalyzes the attachment of proline to tRNA(Pro) in a two-step reaction: proline is first activated by ATP to form Pro-AMP and then transferred to the acceptor end of tRNA(Pro). This chain is Proline--tRNA ligase, found in Rhodopirellula baltica (strain DSM 10527 / NCIMB 13988 / SH1).